Here is a 240-residue protein sequence, read N- to C-terminus: Tetrahydromethanopterin S-methyltransferase subunit A (240 aa).

At 1-218 the chain is on the cytoplasmic side; that stretch reads MADKREPAPG…KFHSGVHAGK (218 aa). 5-hydroxybenzimidazolylcob(I)amide is bound at residue histidine 85. A helical membrane pass occupies residues 219 to 239; the sequence is VEGAMIGLTITISLLGLLLLG. A topological domain (extracellular) is located at residue arginine 240.

This sequence belongs to the MtrA family. In terms of assembly, the complex is composed of 8 subunits; MtrA, MtrB, MtrC, MtrD, MtrE, MtrF, MtrG and MtrH. It depends on 5-hydroxybenzimidazolylcob(I)amide as a cofactor.

The protein resides in the cell membrane. It carries out the reaction 5-methyl-5,6,7,8-tetrahydromethanopterin + coenzyme M + 2 Na(+)(in) = 5,6,7,8-tetrahydromethanopterin + methyl-coenzyme M + 2 Na(+)(out). It participates in one-carbon metabolism; methanogenesis from CO(2); methyl-coenzyme M from 5,10-methylene-5,6,7,8-tetrahydromethanopterin: step 2/2. Part of a complex that catalyzes the formation of methyl-coenzyme M and tetrahydromethanopterin from coenzyme M and methyl-tetrahydromethanopterin. This is an energy-conserving, sodium-ion translocating step. This chain is Tetrahydromethanopterin S-methyltransferase subunit A, found in Methanosarcina mazei (strain ATCC BAA-159 / DSM 3647 / Goe1 / Go1 / JCM 11833 / OCM 88) (Methanosarcina frisia).